A 356-amino-acid chain; its full sequence is Fructose import permease protein FruF (356 aa).

The next 7 membrane-spanning stretches (helical) occupy residues 25 to 45 (IVAFILLVIICTIFQHDFLAL), 77 to 97 (LVISTAGIDLSVGSVMAVAGA), 113 to 133 (ILIALAVGLAIGCVNGALVSF), 180 to 200 (FILGIPANFVIAVIIVILVGL), 231 to 251 (ILFLVYAISGFLAAIAGLFAT), 268 to 290 (MYAILAVVIGGTSLLGGKFSLAG), and 308 to 328 (LGVNAEATPAFFAVVVIVICV).

It belongs to the binding-protein-dependent transport system permease family. The complex is composed of an ATP-binding protein (FruK), two transmembrane proteins (FruF and FruG) and a solute-binding protein (FruE).

It localises to the cell membrane. Part of the high-affinity ABC transporter complex FruEKFG involved in fructose uptake. Can also transport ribose and xylose, with lower affinity. Probably responsible for the translocation of the substrate across the membrane. The polypeptide is Fructose import permease protein FruF (Bifidobacterium longum (strain NCC 2705)).